Here is a 736-residue protein sequence, read N- to C-terminus: Catalase-peroxidase 2 (736 aa).

A signal peptide spans 1–23 (MIKKTLPVLILLALSGSFSTAVA). Positions 102 to 223 (WHGAGTYRTY…LAATQMGLIY (122 aa)) form a cross-link, tryptophyl-tyrosyl-methioninium (Trp-Tyr) (with M-249). Histidine 103 functions as the Proton acceptor in the catalytic mechanism. The segment at residues 223-249 (YVNPEGPGGKPDPLASAKDIREAFSRM) is a cross-link (tryptophyl-tyrosyl-methioninium (Tyr-Met) (with W-102)). Heme b is bound at residue histidine 264.

Belongs to the peroxidase family. Peroxidase/catalase subfamily. Homodimer or homotetramer. Requires heme b as cofactor. Formation of the three residue Trp-Tyr-Met cross-link is important for the catalase, but not the peroxidase activity of the enzyme.

It is found in the periplasm. It carries out the reaction H2O2 + AH2 = A + 2 H2O. It catalyses the reaction 2 H2O2 = O2 + 2 H2O. Bifunctional enzyme with both catalase and broad-spectrum peroxidase activity. The chain is Catalase-peroxidase 2 from Escherichia coli O157:H7.